Reading from the N-terminus, the 240-residue chain is UDP-2,3-diacylglucosamine hydrolase (240 aa).

Mn(2+)-binding residues include Asp8, His10, Asp41, Asn79, and His114. 79–80 is a substrate binding site; that stretch reads NR. Asp122, Ser160, Asn164, Lys167, and His195 together coordinate substrate. The Mn(2+) site is built by His195 and His197.

The protein belongs to the LpxH family. Requires Mn(2+) as cofactor.

The protein resides in the cell inner membrane. The enzyme catalyses UDP-2-N,3-O-bis[(3R)-3-hydroxytetradecanoyl]-alpha-D-glucosamine + H2O = 2-N,3-O-bis[(3R)-3-hydroxytetradecanoyl]-alpha-D-glucosaminyl 1-phosphate + UMP + 2 H(+). It participates in glycolipid biosynthesis; lipid IV(A) biosynthesis; lipid IV(A) from (3R)-3-hydroxytetradecanoyl-[acyl-carrier-protein] and UDP-N-acetyl-alpha-D-glucosamine: step 4/6. In terms of biological role, hydrolyzes the pyrophosphate bond of UDP-2,3-diacylglucosamine to yield 2,3-diacylglucosamine 1-phosphate (lipid X) and UMP by catalyzing the attack of water at the alpha-P atom. Involved in the biosynthesis of lipid A, a phosphorylated glycolipid that anchors the lipopolysaccharide to the outer membrane of the cell. This chain is UDP-2,3-diacylglucosamine hydrolase, found in Shigella dysenteriae serotype 1 (strain Sd197).